Here is a 97-residue protein sequence, read N- to C-terminus: Large ribosomal subunit protein bL27 (97 aa).

Residues M1–F9 constitute a propeptide that is removed on maturation.

This sequence belongs to the bacterial ribosomal protein bL27 family. The N-terminus is cleaved by ribosomal processing cysteine protease Prp.

In Syntrophomonas wolfei subsp. wolfei (strain DSM 2245B / Goettingen), this protein is Large ribosomal subunit protein bL27.